The chain runs to 515 residues: Aldehyde dehydrogenase tropH (515 aa).

238–243 provides a ligand contact to NAD(+); it reads GSVATG. Glu-260 serves as the catalytic Proton acceptor. Catalysis depends on Cys-295, which acts as the Nucleophile.

The protein belongs to the aldehyde dehydrogenase family.

It carries out the reaction an aldehyde + NAD(+) + H2O = a carboxylate + NADH + 2 H(+). The protein operates within secondary metabolite biosynthesis. Its function is as follows. Aldehyde dehydrogenase; part of the gene cluster that mediates the biosynthesis of the tropolone class of fungal maleic anhydrides. The pathway begins with the synthesis of 3-methylorcinaldehyde by the non-reducing polyketide synthase (PKS) tropA. 3-methylorcinaldehyde is the substrate for the FAD-dependent monooxygenase tropB to yield a dearomatized hydroxycyclohexadione. The 2-oxoglutarate-dependent dioxygenase tropC then performs the oxidative ring expansion to provide the first tropolone metabolite stipitaldehyde. Trop D converts stipitaldehyde into stipitacetal which is in turn converted to stipitalide by the short-chain dehydrogenase/reductase tropE. The next steps involve tropF, tropG, tropH, tropI and tropJ to form successive tropolone maleic anhydrides including stipitaldehydic, stipitatonic and stipitatic acids. This is Aldehyde dehydrogenase tropH from Talaromyces stipitatus (strain ATCC 10500 / CBS 375.48 / QM 6759 / NRRL 1006) (Penicillium stipitatum).